A 235-amino-acid chain; its full sequence is Phosphoribosylaminoimidazole-succinocarboxamide synthase (235 aa).

This sequence belongs to the SAICAR synthetase family.

The enzyme catalyses 5-amino-1-(5-phospho-D-ribosyl)imidazole-4-carboxylate + L-aspartate + ATP = (2S)-2-[5-amino-1-(5-phospho-beta-D-ribosyl)imidazole-4-carboxamido]succinate + ADP + phosphate + 2 H(+). Its pathway is purine metabolism; IMP biosynthesis via de novo pathway; 5-amino-1-(5-phospho-D-ribosyl)imidazole-4-carboxamide from 5-amino-1-(5-phospho-D-ribosyl)imidazole-4-carboxylate: step 1/2. The sequence is that of Phosphoribosylaminoimidazole-succinocarboxamide synthase from Streptococcus thermophilus (strain ATCC BAA-491 / LMD-9).